Consider the following 1360-residue polypeptide: Spike glycoprotein (1360 aa).

Positions 1 to 13 (MLFVFLTLLPSCL) are cleaved as a signal peptide. The Extracellular portion of the chain corresponds to 14-1301 (GYIGDFRCIN…GTYEMYVKWP (1288 aa)). The BetaCoV S1-NTD domain occupies 15–296 (YIGDFRCINL…SYTSEIKCKT (282 aa)). 5 disulfide bridges follow: Cys-21-Cys-158, Cys-153-Cys-187, Cys-165-Cys-246, Cys-284-Cys-294, and Cys-329-Cys-354. Asn-60 and Asn-134 each carry an N-linked (GlcNAc...) asparagine; by host glycan. Asn-192 carries an N-linked (GlcNAc...) asparagine; by host glycan. Positions 327–605 (PDCKIEEWLA…GINSGTTCST (279 aa)) constitute a BetaCoV S1-CTD domain. A glycan (N-linked (GlcNAc...) asparagine; by host) is linked at Asn-357. Disulfide bonds link Cys-372/Cys-425 and Cys-384/Cys-603. Asn-435, Asn-566, Asn-664, Asn-704, Asn-727, Asn-747, Asn-776, and Asn-793 each carry an N-linked (GlcNAc...) asparagine; by host glycan. Fusion peptide regions lie at residues 906 to 927 (SAIE…VESY) and 925 to 945 (ESYN…VQSF). N-linked (GlcNAc...) asparagine; by host glycosylation occurs at Asn-929. Cysteines 930 and 941 form a disulfide. The heptad repeat 1 stretch occupies residues 1006–1056 (QKMIASSFNNAIGAIQEGFDATNSALAKIQSVVNANAEALNNLLNQLSNRF). Residues 1035-1079 (QSVVNANAEALNNLLNQLSNRFGAISASLQEILSRLDALEAQAQI) adopt a coiled-coil conformation. Residues Asn-1216, Asn-1226, Asn-1245, Asn-1261, and Asn-1282 are each glycosylated (N-linked (GlcNAc...) asparagine; by host). The segment at 1250–1290 (VPDLSFDIGKLNVTFLDLSYEMNRIQDAIKNLNESYINLKE) is heptad repeat 2. Residues 1263–1291 (TFLDLSYEMNRIQDAIKNLNESYINLKEI) are a coiled coil. The chain crosses the membrane as a helical span at residues 1302 to 1322 (WYVWLLIGLAGVAVCVLLFFI). The Cytoplasmic portion of the chain corresponds to 1323–1360 (CCCTGCGSCCFKKCGNCCDEYGGRQAGIVIHNISSHED). Positions 1356-1360 (SSHED) match the KxHxx motif.

Belongs to the betacoronaviruses spike protein family. As to quaternary structure, homotrimer; each monomer consists of a S1 and a S2 subunit. The resulting peplomers protrude from the virus surface as spikes. In terms of processing, specific enzymatic cleavages in vivo yield mature proteins. The precursor is processed into S1 and S2 by host cell furin or another cellular protease to yield the mature S1 and S2 proteins. Additionally, a second cleavage leads to the release of a fusion peptide after viral attachment to host cell receptor. The cytoplasmic Cys-rich domain is palmitoylated. Spike glycoprotein is digested within host endosomes.

It is found in the virion membrane. The protein resides in the host endoplasmic reticulum-Golgi intermediate compartment membrane. The protein localises to the host cell membrane. Its function is as follows. Attaches the virion to the cell membrane by interacting with host receptor, initiating the infection. Functionally, mediates fusion of the virion and cellular membranes by acting as a class I viral fusion protein. Under the current model, the protein has at least three conformational states: pre-fusion native state, pre-hairpin intermediate state, and post-fusion hairpin state. During viral and target cell membrane fusion, the coiled coil regions (heptad repeats) assume a trimer-of-hairpins structure, positioning the fusion peptide in close proximity to the C-terminal region of the ectodomain. The formation of this structure appears to drive apposition and subsequent fusion of viral and target cell membranes. In terms of biological role, acts as a viral fusion peptide which is unmasked following S2 cleavage occurring upon virus endocytosis. This Rat coronavirus (strain 681) (RCV-SDAV) protein is Spike glycoprotein.